Consider the following 344-residue polypeptide: uncharacterized protein (344 aa).

A run of 6 helical transmembrane segments spans residues 155 to 175 (IARITLAPLGMIFLVYSIFLV), 181 to 201 (WGLGGIIFFLGVYFMVKAYGW), 221 to 241 (LSFIFYVTSAILLIISIVNGF), 254 to 274 (ISSFIFYSTWWFVLSGIFALL), 291 to 311 (FTIIFLLIAFGLIVWASAAYV), and 319 to 339 (ALQNLAGAIVGAILIAAIGVF).

To M.jannaschii MJ1032.

Its subcellular location is the cell membrane. This is an uncharacterized protein from Archaeoglobus fulgidus (strain ATCC 49558 / DSM 4304 / JCM 9628 / NBRC 100126 / VC-16).